Consider the following 770-residue polypeptide: Mitochondrial 15S rRNA processing factor CCM1 (770 aa).

The transit peptide at Met1–His90 directs the protein to the mitochondrion. 2 disordered regions span residues Asn28 to Ala67 and His90 to Ile114. Positions Asn43–Arg53 are enriched in basic and acidic residues. Residues Thr55 to Ser65 show a composition bias toward polar residues. PPR repeat units follow at residues Lys276–Ile310, Ser311–Thr346, Asp349–Val383, Asn384–Pro419, and Asn420–Thr454. The segment covering Arg588–Thr598 has biased composition (basic and acidic residues). Residues Arg588–Thr610 are disordered. The span at Thr599–Thr610 shows a compositional bias: polar residues. The stretch at Asp636–Phe666 is one PPR 6 repeat.

This sequence belongs to the CCM1 family. As to quaternary structure, binds to mitochondrial small subunit 15S rRNA.

The protein localises to the mitochondrion. Its function is as follows. Regulates mitochondrial small subunit maturation by controlling 15S rRNA 5'-end processing. Localizes to the 5' precursor of the 15S rRNA in a position that is subsequently occupied by mS47 in the mature yeast mtSSU. Uses structure and sequence-specific RNA recognition, binding to a single-stranded region of the precursor and specifically recognizing bases -6 to -1. The exchange of Ccm1 for mS47 is coupled to the irreversible removal of precursor rRNA that is accompanied by conformational changes of the mitoribosomal proteins uS5m and mS26. These conformational changes signal completion of 5'-end rRNA processing through protection of the mature 5'-end of the 15S rRNA and stabilization of mS47. The removal of the 5' precursor together with the dissociation of Ccm1 may be catalyzed by the 5'-3' exoribonuclease Pet127. Involved in the specific removal of group I introns in mitochondrial encoded transcripts. The sequence is that of Mitochondrial 15S rRNA processing factor CCM1 (CCM1) from Candida albicans (strain WO-1) (Yeast).